The chain runs to 303 residues: N-acetylmuramic acid 6-phosphate etherase (303 aa).

One can recognise an SIS domain in the interval 61-224; sequence IVQAFQQGGR…TTASMILLGK (164 aa). Glutamate 89 (proton donor) is an active-site residue. The active site involves glutamate 120.

It belongs to the GCKR-like family. MurNAc-6-P etherase subfamily. As to quaternary structure, homodimer.

The enzyme catalyses N-acetyl-D-muramate 6-phosphate + H2O = N-acetyl-D-glucosamine 6-phosphate + (R)-lactate. The protein operates within amino-sugar metabolism; 1,6-anhydro-N-acetylmuramate degradation. It functions in the pathway amino-sugar metabolism; N-acetylmuramate degradation. Its pathway is cell wall biogenesis; peptidoglycan recycling. In terms of biological role, specifically catalyzes the cleavage of the D-lactyl ether substituent of MurNAc 6-phosphate, producing GlcNAc 6-phosphate and D-lactate. Together with AnmK, is also required for the utilization of anhydro-N-acetylmuramic acid (anhMurNAc) either imported from the medium or derived from its own cell wall murein, and thus plays a role in cell wall recycling. The polypeptide is N-acetylmuramic acid 6-phosphate etherase (murQ) (Haemophilus influenzae (strain ATCC 51907 / DSM 11121 / KW20 / Rd)).